A 411-amino-acid polypeptide reads, in one-letter code: MFNLPEVATRLSQNVELLVDEIDKTGSQPNCGNPTLLGPKGLAARDEIILAAEKLLQQGRGPGPSLLSLLESAVDIGTIQTLIRLEVPDQVPPTGSIPYDALVKKLKTPVAPELLQRLIRFTRLAGFLDEDEEGAVKHSPMSAIFVSDPDSAGQARFMADFGIRPCSFIYESIKLDPSGEATRQGPLALMAREPGAREGPTFFEVLEKDPVNRNRWHDGMAVHNDSMVRHVADAYDWDTVKSLVDIGGSEGHVAAVIANAFAHIQITVQDRPEIIEKARQRVDRHRNITFEEHDFFTPQPRIADAYFLRLILHDWNDADCTRIVRQISSALRPGARLLIMDAVLPEPGEGSLQSERQLRRSDIGMYTLFSAKERSLVQMRRLVEDCDDRLRFEKLYTPPGSHASMLSWICE.

Residue Asp-270 coordinates S-adenosyl-L-methionine. Catalysis depends on His-313, which acts as the Proton acceptor.

Belongs to the class I-like SAM-binding methyltransferase superfamily. Cation-independent O-methyltransferase family. As to quaternary structure, homodimer.

It carries out the reaction 6-hydroxytryprostatin B + S-adenosyl-L-methionine = tryprostatin A + S-adenosyl-L-homocysteine + H(+). It functions in the pathway alkaloid biosynthesis. 6-hydroxytryprostatin B O-methyltransferase; part of the gene cluster that mediates the biosynthesis of fumitremorgins, indole alkaloids that carry not only intriguing chemical structures, but also interesting biological and pharmacological activities. The biosynthesis of fumitremorgin-type alkaloids begins by condensation of the two amino acids L-tryptophan and L-proline to brevianamide F, catalyzed by the non-ribosomal peptide synthetase ftmPS/ftmA. Brevianamide F is then prenylated by the prenyltransferase ftmPT1/ftmB in the presence of dimethylallyl diphosphate, resulting in the formation of tryprostatin B. The three cytochrome P450 monooxygenases, ftmP450-1/ftmC, ftmP450-2/ftmE and ftmP450-3/FtmG, are responsible for the conversion of tryprostatin B to 6-hydroxytryprostatin B, tryprostatin A to fumitremorgin C and fumitremorgin C to 12,13-dihydroxyfumitremorgin C, respectively. The putative methyltransferase ftmMT/ftmD is expected for the conversion of 6-hydroxytryprostatin B to tryprostatin A. FtmPT2/FtmH catalyzes the prenylation of 12,13-dihydroxyfumitre-morgin C in the presence of dimethylallyl diphosphate, resulting in the formation of fumitremorgin B. Fumitremorgin B is further converted to verruculogen by ftmOx1/ftmF via the insertion of an endoperoxide bond between the two prenyl moieties. Finally, verruculogen is further converted to fumitremorgin A by the verruculogen prenyltransferase ftmPT3. The polypeptide is 6-hydroxytryprostatin B O-methyltransferase (Neosartorya fischeri (strain ATCC 1020 / DSM 3700 / CBS 544.65 / FGSC A1164 / JCM 1740 / NRRL 181 / WB 181) (Aspergillus fischerianus)).